The chain runs to 491 residues: Nicotinamide phosphoribosyltransferase (491 aa).

At M1 the chain carries N-acetylmethionine. Y188 is modified (phosphotyrosine). Residue R196 participates in diphosphate binding. D219 lines the beta-nicotinamide D-ribonucleotide pocket. 2 residues coordinate diphosphate: H247 and R311. Residues 311-313 (RPD), 353-354 (GD), G384, and R392 each bind beta-nicotinamide D-ribonucleotide. S472 is subject to Phosphoserine.

It belongs to the NAPRTase family. In terms of assembly, homodimer. In terms of tissue distribution, ubiquitously expressed in lymphoid and non-lymphoid tissues.

The protein resides in the nucleus. The protein localises to the cytoplasm. It localises to the secreted. It carries out the reaction beta-nicotinamide D-ribonucleotide + diphosphate = 5-phospho-alpha-D-ribose 1-diphosphate + nicotinamide + H(+). The protein operates within cofactor biosynthesis; NAD(+) biosynthesis; nicotinamide D-ribonucleotide from 5-phospho-alpha-D-ribose 1-diphosphate and nicotinamide: step 1/1. Its function is as follows. The secreted form behaves both as a cytokine with immunomodulating properties and an adipokine with anti-diabetic properties, it has no enzymatic activity, partly because of lack of activation by ATP, which has a low level in extracellular space and plasma. Catalyzes the condensation of nicotinamide with 5-phosphoribosyl-1-pyrophosphate to yield nicotinamide mononucleotide, an intermediate in the biosynthesis of NAD. It is the rate limiting component in the mammalian NAD biosynthesis pathway. Plays a role in the modulation of circadian clock function. NAMPT-dependent oscillatory production of NAD regulates oscillation of clock target gene expression by releasing the core clock component: CLOCK-BMAL1 heterodimer from NAD-dependent SIRT1-mediated suppression. The chain is Nicotinamide phosphoribosyltransferase (Nampt) from Mus musculus (Mouse).